The following is a 199-amino-acid chain: Tumor protein p53-inducible nuclear protein 2 (199 aa).

The LIR signature appears at 26-41; that stretch reads VSEEDEVDGWLIIDLQ. Disordered regions lie at residues 41–69, 117–153, and 173–199; these read QDSY…LMDE, LESG…LHHA, and LQRA…ARES. The segment covering 47–64 has biased composition (pro residues); it reads PPDPRASPAPAGRPPPAP. Phosphoserine is present on Ser-136.

Interacts with VMP1, GABARAP, GABARAPL1, GABARAPL2, MAP1LC3A, MAP1LC3B, MAP1LC3C and THRA. As to expression, abundantly expressed in skeletal muscle and heart and expression is highly repressed in muscle from obese diabetic rats.

It localises to the cytoplasm. The protein localises to the cytosol. Its subcellular location is the nucleus. The protein resides in the PML body. It is found in the cytoplasmic vesicle. It localises to the autophagosome. Functionally, dual regulator of transcription and autophagy. Positively regulates autophagy and is required for autophagosome formation and processing. May act as a scaffold protein that recruits MAP1LC3A, GABARAP and GABARAPL2 and brings them to the autophagosome membrane by interacting with VMP1 where, in cooperation with the BECN1-PI3-kinase class III complex, they trigger autophagosome development. Acts as a transcriptional activator of THRA. The polypeptide is Tumor protein p53-inducible nuclear protein 2 (Tp53inp2) (Rattus norvegicus (Rat)).